The sequence spans 78 residues: MSKVCQVTGKRPVTGNRVSHSNIKTKRRFEPNLHHHRFWVESEKRFVRLRVSSKGMRIIDKKGIDSVLADIRSRGNRV.

It belongs to the bacterial ribosomal protein bL28 family.

The protein is Large ribosomal subunit protein bL28 of Alcanivorax borkumensis (strain ATCC 700651 / DSM 11573 / NCIMB 13689 / SK2).